The sequence spans 484 residues: ATP synthase subunit beta (484 aa).

162 to 169 (GGAGVGKT) contributes to the ATP binding site.

This sequence belongs to the ATPase alpha/beta chains family. As to quaternary structure, F-type ATPases have 2 components, CF(1) - the catalytic core - and CF(0) - the membrane proton channel. CF(1) has five subunits: alpha(3), beta(3), gamma(1), delta(1), epsilon(1). CF(0) has four main subunits: a(1), b(1), b'(1) and c(9-12).

The protein resides in the cellular thylakoid membrane. The enzyme catalyses ATP + H2O + 4 H(+)(in) = ADP + phosphate + 5 H(+)(out). In terms of biological role, produces ATP from ADP in the presence of a proton gradient across the membrane. The catalytic sites are hosted primarily by the beta subunits. The protein is ATP synthase subunit beta of Synechococcus elongatus (strain ATCC 33912 / PCC 7942 / FACHB-805) (Anacystis nidulans R2).